Here is a 164-residue protein sequence, read N- to C-terminus: Transcriptional repressor NrdR (164 aa).

The segment at 3–34 (CPKCNYHKSSVVDSRQAEDGNTIRRRRECEQC) is a zinc-finger region. The ATP-cone domain maps to 49–139 (LLVIKKDGTR…VYKSFKDVDE (91 aa)).

It belongs to the NrdR family. The cofactor is Zn(2+).

Negatively regulates transcription of bacterial ribonucleotide reductase nrd genes and operons by binding to NrdR-boxes. This chain is Transcriptional repressor NrdR, found in Streptococcus pyogenes serotype M5 (strain Manfredo).